A 330-amino-acid polypeptide reads, in one-letter code: Serine/threonine-protein phosphatase PP1-alpha catalytic subunit (330 aa).

Position 2 is an N-acetylserine (Ser2). Phosphoserine is present on residues Ser2 and Ser22. 4 residues coordinate Mn(2+): Asp64, His66, Asp92, and Asn124. His125 functions as the Proton donor in the catalytic mechanism. 2 residues coordinate Mn(2+): His173 and His248. At Lys305 the chain carries N6-acetyllysine. Tyr306 carries the phosphotyrosine modification. The disordered stretch occupies residues 306 to 330 (YGQFSGLNPGGRPITPPRNSAKAKK). Position 320 is a phosphothreonine (Thr320). Ser325 is subject to Phosphoserine.

This sequence belongs to the PPP phosphatase family. PP-1 subfamily. PP1 comprises a catalytic subunit, PPP1CA, PPP1CB or PPP1CC, which is folded into its native form by inhibitor 2 and glycogen synthetase kinase 3, and then complexed to one or several targeting or regulatory subunits. PPP1R12A, PPP1R12B and PPP1R12C mediate binding to myosin. PPP1R3A (in skeletal muscle), PPP1R3B (in liver), PPP1R3C, PPP1R3D and PPP1R3F (in brain) mediate binding to glycogen. Interacts with PPP1R39. Interacts with BTBD10. Interacts with KCTD20. Interacts with PPP1R9A and PPP1R9B. Part of a complex containing PPP1R15B, PP1 and NCK1/2. Interacts with PHACTR4; which acts as an activator of PP1 activity. Interacts with PPP1R15A and PPP1R15B; the interactions mediate binding to EIF2S1. Interacts with PPP1R7. Interacts with YLPM1. Forms a complex with ILF2, ILF3, YLPM1, KHDRBS1, RBMX and NCOA5. Interacts with NOM1 and PPP1R8. Interacts with PPP1R16B. Interacts with RPSA only in the presence of PPP1R16B. Component of the PNUTS-PP1 phosphatase complex, composed of PPP1R10/PNUTS, TOX4, WDR82, and PPP1CA or PPP1CB or PPP1CC. Interacts with PPP1R10/PNUTS and PPP1R8. Interacts with WDR82 in the presence of PPP1R10/PNUTS. Interacts with TRIM28; the interaction dephosphorylates TRIM28 on 'Ser-824' and forms a complex at the p21 promoter site. Interacts with isoform 1 and isoform 4 of NEK2. Interacts with FER; this promotes phosphorylation at Thr-320. Interacts with DAB2; the interaction is mutually exclusive with the AXIN1:PPP1CA interaction. Interacts with FOXP3. Interacts with CENPA. Interacts with ATG16L1. Found in a complex with PPP1CA, PPP1CC, SHC1 and PEAK1. Interacts with tensin TNS1. Interacts with SAXO4, PPP1R21, PPP1R26, PPP1R27, PPP1R35, PPP1R36, PPP1R37, SH3RF2, ELFN1 and ELFN2. Interacts with TPRN; the interaction results in inhibition of PPC1A phosphatase activity. Interacts with SKA1 (via C-terminus); the interaction is direct and required for the recruitment of PP1 to the kinetochore. Interacts with the KNL1 complex subunit KNL1; the interaction is direct and mutually exclusive with KNL1 binding to microtubules. Component of the SHOC2-MRAS-PP1c (SMP) complex consisting of SHOC2, GTP-bound M-Ras/MRAS and the catalytic subunit of protein phosphatase 1 (either PPP1CA, PPP1CB or PPP1CC). SHOC2 and PP1c preferably bind M-Ras/MRAS, but they also bind K-Ras/KRAS, N-Ras/NRAS and H-Ras/HRAS; these interactions are GTP-dependent and both SHOC2 and PP1c are required to form a stable complex. Interacts with SHOC2 in the absence of Ras GTPases. In terms of assembly, (Microbial infection) Interacts with HHV-1 ICP34.5. As to quaternary structure, (Microbial infection) Interacts with Venezuelan equine encephalitis virus (VEEV) capsid protein; this interaction dephosphorylates the capsid protein, which increases its ability to bind to the viral genome. Fe cation is required as a cofactor. It depends on Mn(2+) as a cofactor. Phosphorylated. Dephosphorylated at Thr-320 in the presence of ionizing radiation.

It localises to the cytoplasm. Its subcellular location is the nucleus. It is found in the nucleoplasm. The protein resides in the nucleolus. The catalysed reaction is O-phospho-L-seryl-[protein] + H2O = L-seryl-[protein] + phosphate. It catalyses the reaction O-phospho-L-threonyl-[protein] + H2O = L-threonyl-[protein] + phosphate. The phosphatase activity of the PPP1R15A-PP1 complex toward EIF2S1 is specifically inhibited by Salubrinal, a drug that protects cells from endoplasmic reticulum stress. Its function is as follows. Protein phosphatase that associates with over 200 regulatory proteins to form highly specific holoenzymes which dephosphorylate hundreds of biological targets. Protein phosphatase 1 (PP1) is essential for cell division, transcription elongation, and participates in the regulation of glycogen metabolism, muscle contractility and protein synthesis. Involved in regulation of ionic conductances and long-term synaptic plasticity. May play an important role in dephosphorylating substrates such as the postsynaptic density-associated Ca(2+)/calmodulin dependent protein kinase II. Catalytic component of the PNUTS-PP1 protein phosphatase complex, a protein phosphatase 1 (PP1) complex that promotes RNA polymerase II transcription pause-release, allowing transcription elongation: the PNUTS-PP1 complex mediates the release of RNA polymerase II from promoter-proximal region of genes by catalyzing dephosphorylation of proteins involved in transcription, such as AFF4, CDK9, MEPCE, INTS12, NCBP1, POLR2M/GDOWN1 and SUPT6H. The PNUTS-PP1 complex also regulates transcription termination by mediating dephosphorylation of SUPT5H in termination zones downstream of poly(A) sites, thereby promoting deceleration of RNA polymerase II transcription. PNUTS-PP1 complex is also involved in the response to replication stress by mediating dephosphorylation of POLR2A at 'Ser-5' of the CTD, promoting RNA polymerase II degradation. PNUTS-PP1 also plays a role in the control of chromatin structure and cell cycle progression during the transition from mitosis into interphase. Regulates NEK2 function in terms of kinase activity and centrosome number and splitting, both in the presence and absence of radiation-induced DNA damage. Regulator of neural tube and optic fissure closure, and enteric neural crest cell (ENCCs) migration during development. In balance with CSNK1D and CSNK1E, determines the circadian period length, through the regulation of the speed and rhythmicity of PER1 and PER2 phosphorylation. May dephosphorylate CSNK1D and CSNK1E. Dephosphorylates the 'Ser-418' residue of FOXP3 in regulatory T-cells (Treg) from patients with rheumatoid arthritis, thereby inactivating FOXP3 and rendering Treg cells functionally defective. Dephosphorylates CENPA. Dephosphorylates the 'Ser-139' residue of ATG16L1 causing dissociation of ATG12-ATG5-ATG16L1 complex, thereby inhibiting autophagy. Together with PPP1CC (PP1-gamma subunit), dephosphorylates IFIH1/MDA5 and RIG-I leading to their activation and a functional innate immune response. Core component of the SHOC2-MRAS-PP1c (SMP) holophosphatase complex that regulates the MAPK pathway activation. The SMP complex specifically dephosphorylates the inhibitory phosphorylation at 'Ser-259' of RAF1 kinase, 'Ser-365' of BRAF kinase and 'Ser-214' of ARAF kinase, stimulating their kinase activities. The SMP complex enhances the dephosphorylation activity and substrate specificity of PP1c. Functionally, (Microbial infection) Necessary for alphaviruses replication. The polypeptide is Serine/threonine-protein phosphatase PP1-alpha catalytic subunit (PPP1CA) (Homo sapiens (Human)).